A 316-amino-acid polypeptide reads, in one-letter code: Protoheme IX farnesyltransferase (316 aa).

9 helical membrane-spanning segments follow: residues 29-49, 54-74, 102-122, 123-143, 151-171, 179-199, 224-241, 245-267, and 283-303; these read IIPL…EGRV, LLIT…LNCI, LIFA…FVNV, LSGC…THWL, IVIG…AVTG, VLFA…ALMI, IWYY…LVYP, LGIL…AWQL, and FSIF…LPVT.

Belongs to the UbiA prenyltransferase family. Protoheme IX farnesyltransferase subfamily.

The protein localises to the cell inner membrane. The enzyme catalyses heme b + (2E,6E)-farnesyl diphosphate + H2O = Fe(II)-heme o + diphosphate. Its pathway is porphyrin-containing compound metabolism; heme O biosynthesis; heme O from protoheme: step 1/1. Its function is as follows. Converts heme B (protoheme IX) to heme O by substitution of the vinyl group on carbon 2 of heme B porphyrin ring with a hydroxyethyl farnesyl side group. The protein is Protoheme IX farnesyltransferase of Synechocystis sp. (strain ATCC 27184 / PCC 6803 / Kazusa).